The sequence spans 230 residues: Small ribosomal subunit protein uS7B (230 aa).

A disordered region spans residues 1-22 (MSEEVVESSSQEASQVIPQEQE). Over residues 7–16 (ESSSQEASQV) the composition is skewed to low complexity.

It belongs to the universal ribosomal protein uS7 family.

The protein is Small ribosomal subunit protein uS7B (RpS5b) of Drosophila melanogaster (Fruit fly).